We begin with the raw amino-acid sequence, 493 residues long: Flagellin (493 aa).

The protein belongs to the bacterial flagellin family.

It localises to the secreted. The protein localises to the bacterial flagellum. Flagellin is the subunit protein which polymerizes to form the filaments of bacterial flagella. This Salmonella rubislaw protein is Flagellin (fliC).